The primary structure comprises 281 residues: 2-dehydro-3-deoxyphosphooctonate aldolase (281 aa).

It belongs to the KdsA family.

It is found in the cytoplasm. The catalysed reaction is D-arabinose 5-phosphate + phosphoenolpyruvate + H2O = 3-deoxy-alpha-D-manno-2-octulosonate-8-phosphate + phosphate. The protein operates within carbohydrate biosynthesis; 3-deoxy-D-manno-octulosonate biosynthesis; 3-deoxy-D-manno-octulosonate from D-ribulose 5-phosphate: step 2/3. It participates in bacterial outer membrane biogenesis; lipopolysaccharide biosynthesis. This Stutzerimonas stutzeri (strain A1501) (Pseudomonas stutzeri) protein is 2-dehydro-3-deoxyphosphooctonate aldolase.